Consider the following 107-residue polypeptide: MMTESEFIRASEALFEHIEDQIDENGWDFDCRFAGNVLTIEAGDGTQIIVNRHTPNQELWIAAKSGGYHFAEQNGKWLATRDSRDFYDVLNEALSAASGEAVEIAEL.

This sequence belongs to the frataxin family.

Functionally, involved in iron-sulfur (Fe-S) cluster assembly. May act as a regulator of Fe-S biogenesis. The polypeptide is Iron-sulfur cluster assembly protein CyaY (Neisseria gonorrhoeae (strain ATCC 700825 / FA 1090)).